The primary structure comprises 430 residues: Adenylosuccinate synthetase (430 aa).

GTP is bound by residues 12-18 (GDEGKGK) and 40-42 (GHT). D13 functions as the Proton acceptor in the catalytic mechanism. Residues D13 and G40 each contribute to the Mg(2+) site. IMP contacts are provided by residues 13–16 (DEGK), 38–41 (NAGH), T130, R144, Q224, and T239. H41 acts as the Proton donor in catalysis. Positions 277 to 298 (PFPTEQDNETGRKIGERGREFG) are disordered. Basic and acidic residues predominate over residues 285–296 (ETGRKIGERGRE). 299-305 (TNTGRPR) contacts substrate. Residue R303 coordinates IMP. Residues R305, 331–333 (KLD), and 413–415 (STS) contribute to the GTP site.

Belongs to the adenylosuccinate synthetase family. In terms of assembly, homodimer. Mg(2+) is required as a cofactor.

It is found in the cytoplasm. It catalyses the reaction IMP + L-aspartate + GTP = N(6)-(1,2-dicarboxyethyl)-AMP + GDP + phosphate + 2 H(+). It functions in the pathway purine metabolism; AMP biosynthesis via de novo pathway; AMP from IMP: step 1/2. Functionally, plays an important role in the de novo pathway of purine nucleotide biosynthesis. Catalyzes the first committed step in the biosynthesis of AMP from IMP. This chain is Adenylosuccinate synthetase, found in Bradyrhizobium sp. (strain BTAi1 / ATCC BAA-1182).